The following is a 385-amino-acid chain: Probable alpha-galactosidase (385 aa).

The N-terminal stretch at 1–19 (MMKIAATLLATIALATVNA) is a signal peptide. Disulfide bonds link Cys40–Cys72 and Cys119–Cys149. Asp147 functions as the Nucleophile in the catalytic mechanism. 180–184 (DWGYE) serves as a coordination point for substrate. The active-site Proton donor is Asp202.

It belongs to the glycosyl hydrolase 27 family.

The catalysed reaction is Hydrolysis of terminal, non-reducing alpha-D-galactose residues in alpha-D-galactosides, including galactose oligosaccharides, galactomannans and galactolipids.. In Dictyostelium discoideum (Social amoeba), this protein is Probable alpha-galactosidase (melA).